The chain runs to 648 residues: Threonine--tRNA ligase (648 aa).

In terms of domain architecture, TGS spans 1 to 63 (MTEINIEFPD…NENVKIEIVT (63 aa)). The tract at residues 243-541 (DHRVIGNNLD…LIEMYKGAFP (299 aa)) is catalytic. Residues C337, H388, and H518 each contribute to the Zn(2+) site.

This sequence belongs to the class-II aminoacyl-tRNA synthetase family. As to quaternary structure, homodimer. Zn(2+) is required as a cofactor.

The protein resides in the cytoplasm. The catalysed reaction is tRNA(Thr) + L-threonine + ATP = L-threonyl-tRNA(Thr) + AMP + diphosphate + H(+). Catalyzes the attachment of threonine to tRNA(Thr) in a two-step reaction: L-threonine is first activated by ATP to form Thr-AMP and then transferred to the acceptor end of tRNA(Thr). Also edits incorrectly charged L-seryl-tRNA(Thr). The protein is Threonine--tRNA ligase of Pediococcus pentosaceus (strain ATCC 25745 / CCUG 21536 / LMG 10740 / 183-1w).